Reading from the N-terminus, the 817-residue chain is Probable beta-glucosidase G (817 aa).

The signal sequence occupies residues 1–20; it reads MANIAHLIVSGLLAATVAHG. Residues asparagine 40, asparagine 58, asparagine 229, and asparagine 276 are each glycosylated (N-linked (GlcNAc...) asparagine). Residue aspartate 304 is part of the active site. Residues asparagine 343, asparagine 350, asparagine 402, asparagine 507, asparagine 563, asparagine 584, asparagine 623, asparagine 662, asparagine 679, and asparagine 715 are each glycosylated (N-linked (GlcNAc...) asparagine).

The protein belongs to the glycosyl hydrolase 3 family.

The protein localises to the secreted. The catalysed reaction is Hydrolysis of terminal, non-reducing beta-D-glucosyl residues with release of beta-D-glucose.. It functions in the pathway glycan metabolism; cellulose degradation. In terms of biological role, beta-glucosidases are one of a number of cellulolytic enzymes involved in the degradation of cellulosic biomass. Catalyzes the last step releasing glucose from the inhibitory cellobiose. In Aspergillus terreus (strain NIH 2624 / FGSC A1156), this protein is Probable beta-glucosidase G (bglG).